A 282-amino-acid chain; its full sequence is E3 ubiquitin-protein ligase Siah1 (282 aa).

The disordered stretch occupies residues M1–T28. An RING-type zinc finger spans residues C41–R76. An SBD region spans residues V90–C282. The SIAH-type zinc-finger motif lies at S93 to K153. Zn(2+)-binding residues include C98, C105, H117, C121, C128, C135, H147, and H152.

This sequence belongs to the SINA (Seven in absentia) family. In terms of assembly, homodimer.

The enzyme catalyses S-ubiquitinyl-[E2 ubiquitin-conjugating enzyme]-L-cysteine + [acceptor protein]-L-lysine = [E2 ubiquitin-conjugating enzyme]-L-cysteine + N(6)-ubiquitinyl-[acceptor protein]-L-lysine.. Its pathway is protein modification; protein ubiquitination. Its function is as follows. E3 ubiquitin-protein ligase that mediates ubiquitination and subsequent proteasomal degradation of target proteins. E3 ubiquitin ligases accept ubiquitin from an E2 ubiquitin-conjugating enzyme in the form of a thioester and then directly transfers the ubiquitin to targeted substrates. It probably triggers the ubiquitin-mediated degradation of different substrates. This Danio rerio (Zebrafish) protein is E3 ubiquitin-protein ligase Siah1 (siah1).